The chain runs to 127 residues: Tyrosine-protein phosphatase 2 (127 aa).

The Tyrosine-protein phosphatase domain occupies 1-127 (QGSKVIVMVT…PRDCEAPILV (127 aa)). Acidic residues predominate over residues 63 to 81 (VYDNDDGTEQNDEQTEEEP). Residues 63 to 82 (VYDNDDGTEQNDEQTEEEPE) are disordered.

It belongs to the protein-tyrosine phosphatase family.

It carries out the reaction O-phospho-L-tyrosyl-[protein] + H2O = L-tyrosyl-[protein] + phosphate. The protein is Tyrosine-protein phosphatase 2 (STY-2) of Styela plicata (Wrinkled sea squirt).